Consider the following 359-residue polypeptide: Phospho-N-acetylmuramoyl-pentapeptide-transferase (359 aa).

The next 10 membrane-spanning stretches (helical) occupy residues 3–23, 53–73, 84–104, 117–137, 156–176, 187–207, 231–251, 255–275, 283–303, and 330–350; these read QILF…PVLI, GGVA…LIGI, GLLV…DDFI, TAKL…ALQF, IATV…LVSA, LDGL…IITF, LALI…WNAA, IFMG…LSIT, VVIG…VAVF, and VIIR…ALFY.

This sequence belongs to the glycosyltransferase 4 family. MraY subfamily. Requires Mg(2+) as cofactor.

Its subcellular location is the cell membrane. The catalysed reaction is UDP-N-acetyl-alpha-D-muramoyl-L-alanyl-gamma-D-glutamyl-meso-2,6-diaminopimeloyl-D-alanyl-D-alanine + di-trans,octa-cis-undecaprenyl phosphate = di-trans,octa-cis-undecaprenyl diphospho-N-acetyl-alpha-D-muramoyl-L-alanyl-D-glutamyl-meso-2,6-diaminopimeloyl-D-alanyl-D-alanine + UMP. The protein operates within cell wall biogenesis; peptidoglycan biosynthesis. Catalyzes the initial step of the lipid cycle reactions in the biosynthesis of the cell wall peptidoglycan: transfers peptidoglycan precursor phospho-MurNAc-pentapeptide from UDP-MurNAc-pentapeptide onto the lipid carrier undecaprenyl phosphate, yielding undecaprenyl-pyrophosphoryl-MurNAc-pentapeptide, known as lipid I. This chain is Phospho-N-acetylmuramoyl-pentapeptide-transferase, found in Rhodococcus jostii (strain RHA1).